We begin with the raw amino-acid sequence, 180 residues long: Vacuolar ATPase assembly protein VMA22 (180 aa).

Residues 16 to 37 adopt a coiled-coil conformation; sequence QLLGDLEELEGKRTVLNARVEE. Basic and acidic residues predominate over residues 92-101; sequence EEVGPREAGL. Positions 92–122 are disordered; sequence EEVGPREAGLRRRKGPTKTPEPESSEAPQDP. The stretch at 153-176 forms a coiled coil; the sequence is SLQNRIDWGRSQLRGLQEKLKQLE.

In terms of assembly, accessory component of the multisubunit proton-transporting vacuolar (V)-ATPase protein pump. Expressed throughout the brain.

It localises to the endosome. It is found in the lysosome. The protein resides in the endoplasmic reticulum-Golgi intermediate compartment. Its subcellular location is the cytoplasmic vesicle. The protein localises to the COPI-coated vesicle. It localises to the endoplasmic reticulum. Accessory component of the proton-transporting vacuolar (V)-ATPase protein pump involved in intracellular iron homeostasis. In aerobic conditions, required for intracellular iron homeostasis, thus triggering the activity of Fe(2+) prolyl hydroxylase (PHD) enzymes, and leading to HIF1A hydroxylation and subsequent proteasomal degradation. Necessary for endolysosomal acidification and lysosomal degradation. May be involved in Golgi homeostasis. This Homo sapiens (Human) protein is Vacuolar ATPase assembly protein VMA22.